Here is a 226-residue protein sequence, read N- to C-terminus: Apoptosis regulator OPG045 (226 aa).

Residues 32–37 (NVDHDY) form an essential and sufficient to inhibit host NLRP1 region.

This sequence belongs to the orthopoxvirus OPG045 family. Homodimer. Interacts with host pro-apoptotic protein BCL2L11 (via BH3 domain). Interacts with host NLRP1. Interacts with host BAK.

Its subcellular location is the host mitochondrion outer membrane. It is found in the host cytoplasm. Functionally, plays a role in evading host innate immune response by inhibiting host inflammasome activation. Interacts with and inhibits NLR-mediated interleukin-1 beta/IL1B production in infected cells. At the host mitochondria outer membrane, interacts with the BH3 domain of host BAK and prevents BAK from binding active BAX. In turn, host apoptosis is inhibited. In Vaccinia virus (strain Western Reserve) (VACV), this protein is Apoptosis regulator OPG045 (OPG045).